The chain runs to 214 residues: Orotidine 5'-phosphate decarboxylase (214 aa).

Substrate contacts are provided by residues Asp11, Lys33, 59-68 (DFKIADIPNT), Ser114, 164-174 (PGIGSQGGRAS), Gly187, and Arg188. The active-site Proton donor is the Lys61.

Belongs to the OMP decarboxylase family. Type 1 subfamily. Homodimer.

It carries out the reaction orotidine 5'-phosphate + H(+) = UMP + CO2. Its pathway is pyrimidine metabolism; UMP biosynthesis via de novo pathway; UMP from orotate: step 2/2. Functionally, catalyzes the decarboxylation of orotidine 5'-monophosphate (OMP) to uridine 5'-monophosphate (UMP). This Thermoplasma acidophilum (strain ATCC 25905 / DSM 1728 / JCM 9062 / NBRC 15155 / AMRC-C165) protein is Orotidine 5'-phosphate decarboxylase.